Reading from the N-terminus, the 330-residue chain is MATH domain and coiled-coil domain-containing protein At3g58210 (330 aa).

The region spanning 6–133 (DNKFTWVIQN…NDELKIVAEV (128 aa)) is the MATH domain. Residues 263–314 (FKVDWLEKKLEEVKKKKEEEQTGEARIQELEEELKEFKQKCLDREAMLEKEK) adopt a coiled-coil conformation.

In Arabidopsis thaliana (Mouse-ear cress), this protein is MATH domain and coiled-coil domain-containing protein At3g58210.